The chain runs to 346 residues: GTPase Obg (346 aa).

Residues 1–159 (MQFVDEANIR…RNLGLELSVL (159 aa)) form the Obg domain. Residues 127–149 (NVHFKSSTNRTPRQCTPGEPGDE) are disordered. Over residues 130 to 140 (FKSSTNRTPRQ) the composition is skewed to polar residues. An OBG-type G domain is found at 160 to 333 (ADVGLLGMPN…LVKEVAYGLE (174 aa)). Residues 166-173 (GMPNAGKS), 191-195 (FTTLY), 213-216 (DIPG), 283-286 (NKTD), and 314-316 (SAV) contribute to the GTP site. Residues Ser173 and Thr193 each coordinate Mg(2+).

This sequence belongs to the TRAFAC class OBG-HflX-like GTPase superfamily. OBG GTPase family. Monomer. It depends on Mg(2+) as a cofactor.

The protein resides in the cytoplasm. In terms of biological role, an essential GTPase which binds GTP, GDP and possibly (p)ppGpp with moderate affinity, with high nucleotide exchange rates and a fairly low GTP hydrolysis rate. Plays a role in control of the cell cycle, stress response, ribosome biogenesis and in those bacteria that undergo differentiation, in morphogenesis control. The chain is GTPase Obg from Hydrogenovibrio crunogenus (strain DSM 25203 / XCL-2) (Thiomicrospira crunogena).